A 275-amino-acid polypeptide reads, in one-letter code: 2'-N-acetylparomamine deacetylase (275 aa).

His14, Asp17, and His166 together coordinate Zn(2+).

The protein belongs to the PIGL family. It depends on Zn(2+) as a cofactor.

It carries out the reaction 2'-N-acetylparomamine + H2O = paromamine + acetate. It functions in the pathway antibiotic biosynthesis; butirosin biosynthesis. Its function is as follows. Deacetylase involved in the biosynthesis of butirosin by mediating deacetylation of 2'-N-acetylparomamine. This is 2'-N-acetylparomamine deacetylase (btrD) from Niallia circulans (Bacillus circulans).